A 901-amino-acid chain; its full sequence is Protein translocase subunit SecA (901 aa).

ATP-binding positions include Q87, 105 to 109 (GEGKT), and D512. Residues 855 to 891 (QQLSHQDDETAAAAALAEQTGERKVGRNDPCPCGSGK) form a disordered region. The Zn(2+) site is built by C885, C887, C896, and H897.

Belongs to the SecA family. In terms of assembly, monomer and homodimer. Part of the essential Sec protein translocation apparatus which comprises SecA, SecYEG and auxiliary proteins SecDF-YajC and YidC. Requires Zn(2+) as cofactor.

It is found in the cell inner membrane. The protein resides in the cytoplasm. It carries out the reaction ATP + H2O + cellular proteinSide 1 = ADP + phosphate + cellular proteinSide 2.. Its function is as follows. Part of the Sec protein translocase complex. Interacts with the SecYEG preprotein conducting channel. Has a central role in coupling the hydrolysis of ATP to the transfer of proteins into and across the cell membrane, serving both as a receptor for the preprotein-SecB complex and as an ATP-driven molecular motor driving the stepwise translocation of polypeptide chains across the membrane. The polypeptide is Protein translocase subunit SecA (Cronobacter sakazakii (strain ATCC BAA-894) (Enterobacter sakazakii)).